Consider the following 1119-residue polypeptide: Translation initiation factor IF-2 (1119 aa).

Disordered stretches follow at residues 64–463 and 477–507; these read SIKK…TSGY and RPKK…RQRQ. A compositionally biased stretch (basic and acidic residues) spans 70-102; that stretch reads IKKDNYKQNKEDKSSLISSVEEKPFKDNPEKKP. Polar residues-rich tracts occupy residues 116–153 and 182–212; these read IISN…QNLN and KNTT…KPDQ. A compositionally biased stretch (low complexity) spans 213–224; the sequence is NSSKSKTKNINN. 4 stretches are compositionally biased toward polar residues: residues 242–257, 281–297, 319–328, and 375–387; these read NKQN…QTVP, FNRQ…SSNK, FNRQVNTNRS, and QVIN…NSET. Positions 421-435 are enriched in basic and acidic residues; the sequence is GKTDWDDSAKLEALR. Residues 493–507 are compositionally biased toward basic residues; sequence KQFKKKKKETTRQRQ. The 173-residue stretch at 610–782 folds into the tr-type G domain; that stretch reads KRPPVITVMG…ILLVSEVEDL (173 aa). The segment at 619–626 is G1; sequence GHVDHGKT. GTP is bound at residue 619-626; sequence GHVDHGKT. Residues 644 to 648 form a G2 region; that stretch reads GITQH. Positions 669-672 are G3; sequence DTPG. Residues 669–673 and 723–726 contribute to the GTP site; these read DTPGH and NKID. The interval 723–726 is G4; sequence NKID. Positions 759–761 are G5; sequence SAI.

Belongs to the TRAFAC class translation factor GTPase superfamily. Classic translation factor GTPase family. IF-2 subfamily.

Its subcellular location is the cytoplasm. Functionally, one of the essential components for the initiation of protein synthesis. Protects formylmethionyl-tRNA from spontaneous hydrolysis and promotes its binding to the 30S ribosomal subunits. Also involved in the hydrolysis of GTP during the formation of the 70S ribosomal complex. This is Translation initiation factor IF-2 from Prochlorococcus marinus (strain MIT 9215).